The following is a 139-amino-acid chain: 3-hydroxyacyl-[acyl-carrier-protein] dehydratase FabZ (139 aa).

Residue His46 is part of the active site.

This sequence belongs to the thioester dehydratase family. FabZ subfamily.

The protein localises to the cytoplasm. The enzyme catalyses a (3R)-hydroxyacyl-[ACP] = a (2E)-enoyl-[ACP] + H2O. Its function is as follows. Involved in unsaturated fatty acids biosynthesis. Catalyzes the dehydration of short chain beta-hydroxyacyl-ACPs and long chain saturated and unsaturated beta-hydroxyacyl-ACPs. In Streptococcus pyogenes serotype M3 (strain ATCC BAA-595 / MGAS315), this protein is 3-hydroxyacyl-[acyl-carrier-protein] dehydratase FabZ.